A 615-amino-acid polypeptide reads, in one-letter code: Chromosomal replication initiator protein DnaA (615 aa).

The interval 1–88 is domain I, interacts with DnaA modulators; the sequence is MSEGQINLAM…RVAVTVDPSA (88 aa). The disordered stretch occupies residues 85–272; that stretch reads DPSAVPPSAP…PTSGGPDQLN (188 aa). Positions 88–269 are domain II; that stretch reads AVPPSAPTEE…STNPTSGGPD (182 aa). 2 stretches are compositionally biased toward low complexity: residues 94-112 and 173-190; these read PTEEASSTSSPDSSHPAPD and PSSADPGSPASPAPVAES. A domain III, AAA+ region region spans residues 270–486; that stretch reads QLNPKYTFDT…GALIRVTAFA (217 aa). Residues G314, G316, K317, and T318 each contribute to the ATP site. A domain IV, binds dsDNA region spans residues 487-615; sequence SLNRQSVDLH…QQAHHNHHHL (129 aa).

The protein belongs to the DnaA family. In terms of assembly, oligomerizes as a right-handed, spiral filament on DNA at oriC.

It is found in the cytoplasm. Its function is as follows. Plays an essential role in the initiation and regulation of chromosomal replication. ATP-DnaA binds to the origin of replication (oriC) to initiate formation of the DNA replication initiation complex once per cell cycle. Binds the DnaA box (a 9 base pair repeat at the origin) and separates the double-stranded (ds)DNA. Forms a right-handed helical filament on oriC DNA; dsDNA binds to the exterior of the filament while single-stranded (ss)DNA is stabiized in the filament's interior. The ATP-DnaA-oriC complex binds and stabilizes one strand of the AT-rich DNA unwinding element (DUE), permitting loading of DNA polymerase. After initiation quickly degrades to an ADP-DnaA complex that is not apt for DNA replication. Binds acidic phospholipids. The chain is Chromosomal replication initiator protein DnaA from Thermobifida fusca (strain YX).